The following is a 209-amino-acid chain: COP9 signalosome complex subunit 8 (209 aa).

One can recognise a PCI domain in the interval 8 to 179 (DNAFSFRKLL…GALDVSLNRF (172 aa)). A Phosphoserine modification is found at serine 175.

Belongs to the CSN8 family. In terms of assembly, component of the CSN complex, composed of COPS1/GPS1, COPS2, COPS3, COPS4, COPS5, COPS6, COPS7 (COPS7A or COPS7B), COPS8 and COPS9. In the complex, it probably interacts directly with COPS3, COPS4 and COPS7 (COPS7A or COPS7B).

The protein localises to the cytoplasm. It localises to the nucleus. Component of the COP9 signalosome complex (CSN), a complex involved in various cellular and developmental processes. The CSN complex is an essential regulator of the ubiquitin (Ubl) conjugation pathway by mediating the deneddylation of the cullin subunits of SCF-type E3 ligase complexes, leading to decrease the Ubl ligase activity of SCF-type complexes such as SCF, CSA or DDB2. The complex is also involved in phosphorylation of p53/TP53, c-jun/JUN, IkappaBalpha/NFKBIA, ITPK1 and IRF8/ICSBP, possibly via its association with CK2 and PKD kinases. CSN-dependent phosphorylation of TP53 and JUN promotes and protects degradation by the Ubl system, respectively. This is COP9 signalosome complex subunit 8 (Cops8) from Rattus norvegicus (Rat).